We begin with the raw amino-acid sequence, 137 residues long: ATP synthase epsilon chain (137 aa).

The protein belongs to the ATPase epsilon chain family. F-type ATPases have 2 components, CF(1) - the catalytic core - and CF(0) - the membrane proton channel. CF(1) has five subunits: alpha(3), beta(3), gamma(1), delta(1), epsilon(1). CF(0) has three main subunits: a, b and c.

The protein resides in the cell inner membrane. In terms of biological role, produces ATP from ADP in the presence of a proton gradient across the membrane. The polypeptide is ATP synthase epsilon chain (Yersinia pestis bv. Antiqua (strain Antiqua)).